The following is a 254-amino-acid chain: Alcohol dehydrogenase 1 (254 aa).

10 to 33 lines the NAD(+) pocket; that stretch reads FVAGLGGIGFDTSREIVKSGPKNL. A substrate-binding site is contributed by Ser-138. Tyr-151 serves as the catalytic Proton acceptor.

Belongs to the short-chain dehydrogenases/reductases (SDR) family. As to quaternary structure, homodimer.

It carries out the reaction a primary alcohol + NAD(+) = an aldehyde + NADH + H(+). The catalysed reaction is a secondary alcohol + NAD(+) = a ketone + NADH + H(+). The protein is Alcohol dehydrogenase 1 (Adh1) of Drosophila navojoa (Fruit fly).